Reading from the N-terminus, the 288-residue chain is Transmembrane and coiled-coil domain-containing protein 5A (288 aa).

Residues 13-105 are a coiled coil; sequence IISLNMDLER…VHSISELQRK (93 aa). Residues 227–249 form a helical membrane-spanning segment; that stretch reads SLLFSTLFFIRLLGYLIFHLSFI.

As to expression, testis-specific. Expressed in spermatogenic cells of testis but disappear by the time mature spermatozoa are formed (at protein level).

Its subcellular location is the endoplasmic reticulum membrane. The protein localises to the nucleus membrane. In Rattus norvegicus (Rat), this protein is Transmembrane and coiled-coil domain-containing protein 5A (Tmco5a).